We begin with the raw amino-acid sequence, 188 residues long: Large ribosomal subunit protein eL18A (188 aa).

The interval 153-188 (GKAPSTPHSRTKPYVLSKGRKFERARGRRASRGYKN) is disordered. Residues 178 to 188 (RGRRASRGYKN) show a composition bias toward basic residues.

It belongs to the eukaryotic ribosomal protein eL18 family. Component of the large ribosomal subunit.

The protein resides in the cytoplasm. Its function is as follows. Component of the large ribosomal subunit. The ribosome is a large ribonucleoprotein complex responsible for the synthesis of proteins in the cell. The chain is Large ribosomal subunit protein eL18A (rpl18-a) from Xenopus laevis (African clawed frog).